A 458-amino-acid chain; its full sequence is Argininosuccinate lyase (458 aa).

Belongs to the lyase 1 family. Argininosuccinate lyase subfamily.

It is found in the cytoplasm. It catalyses the reaction 2-(N(omega)-L-arginino)succinate = fumarate + L-arginine. It functions in the pathway amino-acid biosynthesis; L-arginine biosynthesis; L-arginine from L-ornithine and carbamoyl phosphate: step 3/3. In Anoxybacillus flavithermus (strain DSM 21510 / WK1), this protein is Argininosuccinate lyase.